A 323-amino-acid polypeptide reads, in one-letter code: Annexin A5 (323 aa).

4 Annexin repeats span residues 17–88, 89–160, 172–244, and 248–319; these read FNDK…ALMV, PAHL…SLVQ, GQVE…AVVK, and SIQG…LLCG.

The protein belongs to the annexin family.

Calcium/phospholipid-binding protein which promotes membrane fusion and is involved in exocytosis. The sequence is that of Annexin A5 from Cynops pyrrhogaster (Japanese fire-bellied newt).